The chain runs to 411 residues: Serpin A3-1 (411 aa).

Residues 1-24 (MRAERTSFLLALGLLVAGIRSVHC) form the signal peptide. 4 N-linked (GlcNAc...) asparagine glycosylation sites follow: asparagine 100, asparagine 180, asparagine 230, and asparagine 264.

This sequence belongs to the serpin family. In terms of assembly, homodimer. Post-translationally, N-glycosylated. In terms of tissue distribution, detected in all tissues examined (at protein level). Abundantly expressed in liver, kidney and spleen. Lowest levels were observed in diaphragm muscle.

It is found in the cytoplasmic vesicle. The protein localises to the secretory vesicle. The protein resides in the chromaffin granule. Its subcellular location is the secreted. Its function is as follows. Potent inhibitor of the serine proteases elastase and trypsin. Moderately inhibits the serine proteases plasmin and chymotrypsin, and the thiol protease proenkephalin-processing enzyme. Does not inhibit the serine proteases cathepsin G, furin, kallikrein, thrombin, tissue plasminogen activator and urokinase, or the cysteine proteases cathepsin B, cathepsin L and papain. The polypeptide is Serpin A3-1 (Bos taurus (Bovine)).